A 192-amino-acid polypeptide reads, in one-letter code: UPF0312 protein PFLU_5725 (192 aa).

The first 23 residues, 1–23 (MLKKTLAALAIGTALLSAGQVMA), serve as a signal peptide directing secretion.

It belongs to the UPF0312 family. Type 1 subfamily.

The protein resides in the periplasm. The polypeptide is UPF0312 protein PFLU_5725 (Pseudomonas fluorescens (strain SBW25)).